The chain runs to 357 residues: Phenylalanine--tRNA ligase alpha subunit (357 aa).

A Mg(2+)-binding site is contributed by Glu258.

Belongs to the class-II aminoacyl-tRNA synthetase family. Phe-tRNA synthetase alpha subunit type 1 subfamily. Tetramer of two alpha and two beta subunits. It depends on Mg(2+) as a cofactor.

It localises to the cytoplasm. It catalyses the reaction tRNA(Phe) + L-phenylalanine + ATP = L-phenylalanyl-tRNA(Phe) + AMP + diphosphate + H(+). This chain is Phenylalanine--tRNA ligase alpha subunit, found in Caulobacter vibrioides (strain ATCC 19089 / CIP 103742 / CB 15) (Caulobacter crescentus).